The chain runs to 126 residues: Large ribosomal subunit protein bL17 (126 aa).

Belongs to the bacterial ribosomal protein bL17 family. In terms of assembly, part of the 50S ribosomal subunit. Contacts protein L32.

The sequence is that of Large ribosomal subunit protein bL17 from Nitrosococcus oceani (strain ATCC 19707 / BCRC 17464 / JCM 30415 / NCIMB 11848 / C-107).